We begin with the raw amino-acid sequence, 55 residues long: Glycine-rich antimicrobial peptide Pg-AMP (55 aa).

A compositionally biased stretch (gly residues) spans 18 to 39 (GYGGYGGGRYGGGYGSGRGQPV). The tract at residues 18–55 (GYGGYGGGRYGGGYGSGRGQPVGQGVERSHDDNRNQPR) is disordered. The segment covering 44 to 55 (ERSHDDNRNQPR) has biased composition (basic and acidic residues).

As to quaternary structure, monomer and homodimer. Might act by homodimer formation.

Functionally, has antibacterial activity against the Gram-negative bacteria Klebsiella sp., Proteus sp., E.coli ATCC 8739 (MIC=72 ug/ml) and K.pneumoniae (MIC=32 ug/ml). Has no activity against the Gram-negative bacterium S.typhimurium or the Gram-positive bacterium S.aureus. Does not have antifungal activity against the human and plant pathogenic fungi F.oxysporum, A.fumigatus and R.solani. This is Glycine-rich antimicrobial peptide Pg-AMP from Psidium guajava (Guava).